The following is a 360-amino-acid chain: Phosphoserine aminotransferase (360 aa).

An L-glutamate-binding site is contributed by Arg-43. Residues 77–78 (AS), Trp-103, Thr-152, Asp-172, and Gln-195 each bind pyridoxal 5'-phosphate. An N6-(pyridoxal phosphate)lysine modification is found at Lys-196. 237–238 (NT) provides a ligand contact to pyridoxal 5'-phosphate.

This sequence belongs to the class-V pyridoxal-phosphate-dependent aminotransferase family. SerC subfamily. Homodimer. The cofactor is pyridoxal 5'-phosphate.

Its subcellular location is the cytoplasm. It catalyses the reaction O-phospho-L-serine + 2-oxoglutarate = 3-phosphooxypyruvate + L-glutamate. The catalysed reaction is 4-(phosphooxy)-L-threonine + 2-oxoglutarate = (R)-3-hydroxy-2-oxo-4-phosphooxybutanoate + L-glutamate. The protein operates within amino-acid biosynthesis; L-serine biosynthesis; L-serine from 3-phospho-D-glycerate: step 2/3. It participates in cofactor biosynthesis; pyridoxine 5'-phosphate biosynthesis; pyridoxine 5'-phosphate from D-erythrose 4-phosphate: step 3/5. Its function is as follows. Catalyzes the reversible conversion of 3-phosphohydroxypyruvate to phosphoserine and of 3-hydroxy-2-oxo-4-phosphonooxybutanoate to phosphohydroxythreonine. This chain is Phosphoserine aminotransferase, found in Syntrophobacter fumaroxidans (strain DSM 10017 / MPOB).